The primary structure comprises 419 residues: Tyrosine--tRNA ligase (419 aa).

Y34 provides a ligand contact to L-tyrosine. Residues 39 to 48 (PSGDSMHIGH) carry the 'HIGH' region motif. L-tyrosine contacts are provided by Y168 and Q172. The 'KMSKS' region signature appears at 230 to 234 (KFGKS). Position 233 (K233) interacts with ATP. Residues 352–418 (VNLVDWLVTL…GKKKYFLVSY (67 aa)) enclose the S4 RNA-binding domain.

It belongs to the class-I aminoacyl-tRNA synthetase family. TyrS type 1 subfamily. In terms of assembly, homodimer.

It is found in the cytoplasm. The catalysed reaction is tRNA(Tyr) + L-tyrosine + ATP = L-tyrosyl-tRNA(Tyr) + AMP + diphosphate + H(+). In terms of biological role, catalyzes the attachment of tyrosine to tRNA(Tyr) in a two-step reaction: tyrosine is first activated by ATP to form Tyr-AMP and then transferred to the acceptor end of tRNA(Tyr). The protein is Tyrosine--tRNA ligase of Listeria innocua serovar 6a (strain ATCC BAA-680 / CLIP 11262).